Reading from the N-terminus, the 293-residue chain is Ribulose bisphosphate carboxylase/oxygenase activase, chloroplastic (293 aa).

Residue 75–82 (PGTGKTTV) participates in ATP binding.

Belongs to the CbxX/CfxQ family. In terms of assembly, forms homooligomers. Forms heterohexameric rings with the nuclear-encoded Rca subunit consisting of 3 of each nuclear- and plastidial-encoded subunits that alternate in the ring.

Its subcellular location is the plastid. The protein resides in the chloroplast. In terms of biological role, required for the expression of ribulose 1,5-bisphosphate carboxylase/oxygenase (RuBisCo). ATPase involved in the activation of red-type RuBisCo, which tends to form inactive complexes with its substrate ribulose 1,5-bisphosphate (RuBP). Catalyzes the release of RuBP from inhibited RuBisCo in an ATP-dependent manner. Activation of RuBisCO involves the ATP-dependent carboxylation of the epsilon-amino group of lysine leading to a carbamate structure. The nuclear-encoded subunit plays a more critical role in activase function than the plastidial-encoded subunit. This Cyanidioschyzon merolae (strain NIES-3377 / 10D) (Unicellular red alga) protein is Ribulose bisphosphate carboxylase/oxygenase activase, chloroplastic.